The sequence spans 795 residues: Phenylalanine--tRNA ligase beta subunit (795 aa).

The region spanning 39–148 (AGSFHGVVVG…ADAPIGTDIR (110 aa)) is the tRNA-binding domain. A B5 domain is found at 401–476 (PKRATITLRR…RVYGYNNIPD (76 aa)). Positions 454, 460, 463, and 464 each coordinate Mg(2+). The region spanning 701 to 794 (SRFPANRRDI…LKERFQASLR (94 aa)) is the FDX-ACB domain.

It belongs to the phenylalanyl-tRNA synthetase beta subunit family. Type 1 subfamily. Tetramer of two alpha and two beta subunits. Mg(2+) is required as a cofactor.

The protein localises to the cytoplasm. It carries out the reaction tRNA(Phe) + L-phenylalanine + ATP = L-phenylalanyl-tRNA(Phe) + AMP + diphosphate + H(+). The polypeptide is Phenylalanine--tRNA ligase beta subunit (Shigella sonnei (strain Ss046)).